The sequence spans 382 residues: Alanine racemase 1 (382 aa).

Residue Lys-39 is the Proton acceptor; specific for D-alanine of the active site. Lys-39 carries the post-translational modification N6-(pyridoxal phosphate)lysine. Position 138 (Arg-138) interacts with substrate. The active-site Proton acceptor; specific for L-alanine is the Tyr-265. Residue Met-312 coordinates substrate.

The protein belongs to the alanine racemase family. Requires pyridoxal 5'-phosphate as cofactor.

It carries out the reaction L-alanine = D-alanine. It participates in amino-acid biosynthesis; D-alanine biosynthesis; D-alanine from L-alanine: step 1/1. Catalyzes the interconversion of L-alanine and D-alanine. May also act on other amino acids. This is Alanine racemase 1 (alr1) from Staphylococcus aureus (strain N315).